The primary structure comprises 219 residues: Probable transaldolase (219 aa).

Catalysis depends on lysine 83, which acts as the Schiff-base intermediate with substrate.

Belongs to the transaldolase family. Type 3B subfamily.

It localises to the cytoplasm. The catalysed reaction is D-sedoheptulose 7-phosphate + D-glyceraldehyde 3-phosphate = D-erythrose 4-phosphate + beta-D-fructose 6-phosphate. It functions in the pathway carbohydrate degradation; pentose phosphate pathway; D-glyceraldehyde 3-phosphate and beta-D-fructose 6-phosphate from D-ribose 5-phosphate and D-xylulose 5-phosphate (non-oxidative stage): step 2/3. In terms of biological role, transaldolase is important for the balance of metabolites in the pentose-phosphate pathway. The protein is Probable transaldolase of Cereibacter sphaeroides (strain ATCC 17029 / ATH 2.4.9) (Rhodobacter sphaeroides).